Here is a 696-residue protein sequence, read N- to C-terminus: DNA ligase (696 aa).

NAD(+) is bound by residues 36-40 (DAVYD), 85-86 (SL), and E124. Residue K126 is the N6-AMP-lysine intermediate of the active site. NAD(+) contacts are provided by R147, E184, K308, and K332. Residues C426, C429, C444, and C449 each contribute to the Zn(2+) site. Residues 618-696 (QRTVSLQGQT…EEELLKLLAS (79 aa)) enclose the BRCT domain.

This sequence belongs to the NAD-dependent DNA ligase family. LigA subfamily. Mg(2+) is required as a cofactor. Mn(2+) serves as cofactor.

It catalyses the reaction NAD(+) + (deoxyribonucleotide)n-3'-hydroxyl + 5'-phospho-(deoxyribonucleotide)m = (deoxyribonucleotide)n+m + AMP + beta-nicotinamide D-nucleotide.. Its function is as follows. DNA ligase that catalyzes the formation of phosphodiester linkages between 5'-phosphoryl and 3'-hydroxyl groups in double-stranded DNA using NAD as a coenzyme and as the energy source for the reaction. It is essential for DNA replication and repair of damaged DNA. This chain is DNA ligase, found in Prochlorococcus marinus (strain MIT 9303).